The following is a 347-amino-acid chain: GMP reductase (347 aa).

A108–A131 is an NADP(+) binding site. 2 residues coordinate K(+): G181 and G183. The active-site Thioimidate intermediate is C186. I216–V239 serves as a coordination point for NADP(+).

Belongs to the IMPDH/GMPR family. GuaC type 1 subfamily. As to quaternary structure, homotetramer.

It catalyses the reaction IMP + NH4(+) + NADP(+) = GMP + NADPH + 2 H(+). Catalyzes the irreversible NADPH-dependent deamination of GMP to IMP. It functions in the conversion of nucleobase, nucleoside and nucleotide derivatives of G to A nucleotides, and in maintaining the intracellular balance of A and G nucleotides. This chain is GMP reductase, found in Shigella dysenteriae serotype 1 (strain Sd197).